Here is a 101-residue protein sequence, read N- to C-terminus: Interleukin-8 (101 aa).

The first 22 residues, 1–22, serve as a signal peptide directing secretion; sequence MTSKLAVALLAAFLLSAALCEA. Intrachain disulfides connect Cys34–Cys61 and Cys36–Cys77.

The protein belongs to the intercrine alpha (chemokine CxC) family. In terms of assembly, homodimer. Interacts with TNFAIP6 (via Link domain); this interaction interferes with chemokine binding to glycosaminoglycans.

The protein resides in the secreted. In terms of biological role, chemotactic factor that mediates inflammatory response by attracting neutrophils, basophils, and T-cells to clear pathogens and protect the host from infection. Also plays an important role in neutrophil activation. Released in response to an inflammatory stimulus, exerts its effect by binding to the G-protein-coupled receptors CXCR1 and CXCR2, primarily found in neutrophils, monocytes and endothelial cells. G-protein heterotrimer (alpha, beta, gamma subunits) constitutively binds to CXCR1/CXCR2 receptor and activation by IL8 leads to beta and gamma subunits release from Galpha (GNAI2 in neutrophils) and activation of several downstream signaling pathways including PI3K and MAPK pathways. The protein is Interleukin-8 (CXCL8) of Bos taurus (Bovine).